Consider the following 122-residue polypeptide: Large ribosomal subunit protein uL18 (122 aa).

Positions 1 to 25 (MSQISRKQQTQKRHRRLRRHITGTS) are disordered. Over residues 9–21 (QTQKRHRRLRRHI) the composition is skewed to basic residues.

The protein belongs to the universal ribosomal protein uL18 family. As to quaternary structure, part of the 50S ribosomal subunit; part of the 5S rRNA/L5/L18/L25 subcomplex. Contacts the 5S and 23S rRNAs.

Its function is as follows. This is one of the proteins that bind and probably mediate the attachment of the 5S RNA into the large ribosomal subunit, where it forms part of the central protuberance. The chain is Large ribosomal subunit protein uL18 from Synechococcus sp. (strain CC9605).